Reading from the N-terminus, the 502-residue chain is UDP-N-acetylglucosamine diphosphorylase 2 (502 aa).

Positions 130-133 match the Substrate binding motif; sequence LSGG. Asn-250 lines the substrate pocket. Residues 332 to 333 carry the Substrate binding motif; the sequence is EY. Lys-429 contributes to the substrate binding site.

The protein belongs to the UDPGP type 1 family. Monomer. The cofactor is Mg(2+). It depends on Mn(2+) as a cofactor. Expressed in root tips, stipules, lateral root primordia, immature anthers and at the branching points of the flowering shoots.

It is found in the cytoplasm. The enzyme catalyses N-acetyl-alpha-D-glucosamine 1-phosphate + UTP + H(+) = UDP-N-acetyl-alpha-D-glucosamine + diphosphate. It carries out the reaction N-acetyl-alpha-D-galactosamine 1-phosphate + UTP + H(+) = UDP-N-acetyl-alpha-D-galactosamine + diphosphate. The catalysed reaction is alpha-D-glucose 1-phosphate + UTP + H(+) = UDP-alpha-D-glucose + diphosphate. The protein operates within nucleotide-sugar biosynthesis; UDP-N-acetyl-alpha-D-glucosamine biosynthesis; UDP-N-acetyl-alpha-D-glucosamine from N-acetyl-alpha-D-glucosamine 1-phosphate: step 1/1. Uridylyltransferase involved in the biosynthesis of UDP-glucosamine, an essential precursor for glycoprotein and glycolipid synthesis. Can use UDP-glucosamine, the 4-epimer UDP-galactosamine and UDP-glucose as substrates. Acts redundantly with GLCNAC1PUT1. Required for gametogenesis and embryo development. This is UDP-N-acetylglucosamine diphosphorylase 2 (GLCNAC1PUT2) from Arabidopsis thaliana (Mouse-ear cress).